Reading from the N-terminus, the 463-residue chain is tRNA (guanine(10)-N(2))-methyltransferase TRMT11 (463 aa).

N-acetylalanine is present on Ala2.

It belongs to the class I-like SAM-binding methyltransferase superfamily. TRM11 methyltransferase family. As to quaternary structure, part of the heterodimeric TRMT11-TRM112 methyltransferase complex; this complex forms an active tRNA methyltransferase, where TRMT112 acts as an activator of the catalytic subunit TRMT11.

It localises to the cytoplasm. The catalysed reaction is guanosine(10) in tRNA + S-adenosyl-L-methionine = N(2)-methylguanosine(10) in tRNA + S-adenosyl-L-homocysteine + H(+). Its function is as follows. Catalytic subunit of the TRMT11-TRM112 methyltransferase complex, that specifically mediates the S-adenosyl-L-methionine-dependent N(2)-methylation of guanosine nucleotide at position 10 (m2G10) in tRNAs. This is one of the major tRNA (guanine-N(2))-methyltransferases. This Homo sapiens (Human) protein is tRNA (guanine(10)-N(2))-methyltransferase TRMT11.